We begin with the raw amino-acid sequence, 482 residues long: Auxin transporter-like protein 2 (482 aa).

Topologically, residues 1 to 58 (MVPAGDQAEEAIVADAGKEEAEVRAAMGVEQDGKFSMTSLLWHGGSVWDAWFSCASNQ) are cytoplasmic. Residues 59-76 (VAQVLLTLPYSFSQLGML) traverse the membrane as a helical segment. Topologically, residues 77-78 (SG) are extracellular. The helical transmembrane segment at 79–99 (LLLQVFYGLMGSWTAYLISVL) threads the bilayer. The Cytoplasmic portion of the chain corresponds to 100–134 (YVEYRARKEKEGVSFKNHVIQWFEVLDGLLGPYWK). A helical membrane pass occupies residues 135 to 155 (AAGLAFNCTFLLFGSVIQLIA). Residues 156 to 171 (CASNIYYINDRLDKRT) are Extracellular-facing. Residues 172 to 192 (WTYIFGACCSTTVFIPSFHNY) traverse the membrane as a helical segment. Position 193 (Arg-193) is a topological domain, cytoplasmic. A helical transmembrane segment spans residues 194 to 214 (IWSFLGLGMTTYTAWYLAIAA). At 215–231 (AVHGQVDGVTHSGPSKM) the chain is on the extracellular side. A helical transmembrane segment spans residues 232-252 (VLYFTGATNILYTFGGHAVTV). The Cytoplasmic segment spans residues 253–265 (EIMHAMWKPQKFK). Residues 266–286 (YIYLVATLYVFTLTLPSASAM) traverse the membrane as a helical segment. At 287–313 (YWAFGDALLTHSNAFSLLPRSGWRDAA) the chain is on the extracellular side. A helical membrane pass occupies residues 314–334 (VILMLIHQFITFGFACTPLYF). The Cytoplasmic portion of the chain corresponds to 335-355 (VWEKAIGMHGTRSVLTRALAR). The chain crosses the membrane as a helical span at residues 356–376 (LPIVVPIWFLAIIFPFFGPIN). Position 377 (Ser-377) is a topological domain, extracellular. Residues 378–398 (AVGALLVSFTVYIIPSLSHIL) traverse the membrane as a helical segment. Residues 399 to 423 (TYRSASARLNAAEKPPPFLPSWSGM) lie on the Cytoplasmic side of the membrane. A helical transmembrane segment spans residues 424-444 (FVVNVFVVAWVLVVGFGLGGW). At 445–482 (ASVTNFIKQIDTFGLFAKCYQCPPRAHAGAPLPAPPRH) the chain is on the extracellular side.

This sequence belongs to the amino acid/polyamine transporter 2 family. Amino acid/auxin permease (AAAP) (TC 2.A.18.1) subfamily.

It is found in the cell membrane. In terms of biological role, carrier protein involved in proton-driven auxin influx. May mediate the formation of auxin gradient from developing leaves (site of auxin biosynthesis) to tips. The polypeptide is Auxin transporter-like protein 2 (Oryza sativa subsp. japonica (Rice)).